The primary structure comprises 202 residues: Transmembrane gamma-carboxyglutamic acid protein 2 (202 aa).

The first 23 residues, 1–23, serve as a signal peptide directing secretion; the sequence is MRGHPSLLLLYMALTTCLDTSPS. A propeptide spanning residues 24 to 49 is cleaved from the precursor; it reads EETDQEVFLGPPEAQSFLSSHTRIPR. The Gla domain occupies 50 to 96; the sequence is ANHWDLELLTPGNLERECLEERCSWEEAREYFEDNTLTERFWESYIY. The Extracellular portion of the chain corresponds to 50–109; the sequence is ANHWDLELLTPGNLERECLEERCSWEEAREYFEDNTLTERFWESYIYNGKGGRGRVDVAS. Cysteine 67 and cysteine 72 are disulfide-bonded. Glutamate 70 carries the post-translational modification 4-carboxyglutamate. The chain crosses the membrane as a helical span at residues 110–130; sequence LAVGLTGGILLIVLAGLGAFW. Residues 131–202 lie on the Cytoplasmic side of the membrane; the sequence is YLRWRQHRGQ…PPYTSLRRPH (72 aa). The interval 143 to 202 is disordered; that stretch reads CPQEAGLISPLSPLNPLGPPTPLPPPPPPPPGLPTYEQALAASGVHDAPPPPYTSLRRPH. Residues 158 to 175 are compositionally biased toward pro residues; the sequence is PLGPPTPLPPPPPPPPGL. Positions 175–178 match the LPXY motif; mediates binding to WW domain-containing proteins motif; that stretch reads LPTY. Residues 192–195 carry the PPXY motif; mediates binding to WW domain-containing proteins motif; that stretch reads PPPY.

Interacts with NEDD4. Interacts (via cytoplasmic domain) with transcriptional coactivator YAP1. In terms of processing, gamma-carboxyglutamate residues are formed by vitamin K dependent carboxylation. These residues are essential for the binding of calcium. In terms of tissue distribution, widely expressed with highest levels in kidney. Also highly expressed in the thyroid.

Its subcellular location is the cell membrane. In Homo sapiens (Human), this protein is Transmembrane gamma-carboxyglutamic acid protein 2.